A 577-amino-acid polypeptide reads, in one-letter code: MFS-type transporter pgmG (577 aa).

The interval Met1 to Gln32 is disordered. Over residues Gly21–Glu31 the composition is skewed to basic and acidic residues. The next 8 helical transmembrane spans lie at Phe45 to Val65, Trp84 to Tyr104, Trp111 to Pro131, Ala141 to Asn161, Thr174 to Val194, Pro218 to Leu238, Leu259 to Gly279, and Cys292 to Gly312. N-linked (GlcNAc...) asparagine glycosylation occurs at Asn317. A helical membrane pass occupies residues Phe330 to Phe350. N-linked (GlcNAc...) asparagine glycosylation is present at Asn360. Transmembrane regions (helical) follow at residues Ala363 to Leu383, Met395 to Ile415, Gly426 to Ala446, Val457 to Ala477, and Ile532 to Phe552.

Belongs to the major facilitator superfamily. TCR/Tet family.

It is found in the membrane. In terms of biological role, MFS-type transporter; part of the gene cluster that mediates the biosynthesis of pleosporalin A, ascomycone A, as well as a third cryptic naphthoquinone derived pigment, all responsible for the coloration of conidia. Seems not to be involved in pigment biosynthesis although its expression is regulated by the cluster-specific transcription factor pgmR. The chain is MFS-type transporter pgmG from Aspergillus terreus (strain NIH 2624 / FGSC A1156).